A 124-amino-acid chain; its full sequence is Seripauperin-15 (124 aa).

Residues 1–20 (MVKLTSIAAGVAAIAAGVAA) form the signal peptide.

It belongs to the SRP1/TIP1 family. Seripauperin subfamily.

This chain is Seripauperin-15 (PAU15), found in Saccharomyces cerevisiae (strain ATCC 204508 / S288c) (Baker's yeast).